The following is a 202-amino-acid chain: ATP-dependent Clp protease proteolytic subunit (202 aa).

The active-site Nucleophile is Ser101. His126 is an active-site residue.

The protein belongs to the peptidase S14 family. In terms of assembly, component of the chloroplastic Clp protease core complex.

Its subcellular location is the plastid. The protein localises to the chloroplast stroma. The catalysed reaction is Hydrolysis of proteins to small peptides in the presence of ATP and magnesium. alpha-casein is the usual test substrate. In the absence of ATP, only oligopeptides shorter than five residues are hydrolyzed (such as succinyl-Leu-Tyr-|-NHMec, and Leu-Tyr-Leu-|-Tyr-Trp, in which cleavage of the -Tyr-|-Leu- and -Tyr-|-Trp bonds also occurs).. Functionally, cleaves peptides in various proteins in a process that requires ATP hydrolysis. Has a chymotrypsin-like activity. Plays a major role in the degradation of misfolded proteins. The chain is ATP-dependent Clp protease proteolytic subunit from Platanus occidentalis (Sycamore).